The sequence spans 378 residues: Alpha-galactosidase (378 aa).

The signal sequence occupies residues 1–15; the sequence is MVKSPGTEDYTRRSL. 2 cysteine pairs are disulfide-bonded: Cys-36–Cys-68 and Cys-116–Cys-147. The Nucleophile role is filled by Asp-145. Residue 178-182 coordinates substrate; it reads EWGEE. Residue Asp-200 is the Proton donor of the active site.

It belongs to the glycosyl hydrolase 27 family.

The catalysed reaction is Hydrolysis of terminal, non-reducing alpha-D-galactose residues in alpha-D-galactosides, including galactose oligosaccharides, galactomannans and galactolipids.. Functionally, preferentially cleaves alpha-1,3 and alpha-1,4 glycoside linkages. Involved in the hydrolysis of the galactomannan, it splits alpha-linked galactose moieties. It is particularly suitable for the hydrolysis of guar gum to a gum with improved gelling properties. Can cleave terminal alpha-1,3-linked galactose residues responsible for blood group B specificity from the surface of erythrocytes thereby converting these cells serologically to group O. The chain is Alpha-galactosidase from Coffea arabica (Arabian coffee).